Reading from the N-terminus, the 410-residue chain is Interleukin-1 receptor type 2 (410 aa).

An N-terminal signal peptide occupies residues 1-13 (MFILLVLVTGVSA). Residues 14-355 (FTTPTVVHTG…SQSLHTTVKE (342 aa)) lie on the Extracellular side of the membrane. 3 consecutive Ig-like C2-type domains span residues 35-136 (PTVH…VELK), 146-237 (PHVS…RNIE), and 249-357 (PVII…KEVS). Intrachain disulfides connect C42-C128, C64-C120, and C164-C219. N-linked (GlcNAc...) asparagine glycans are attached at residues N124, N208, N231, and N289. Residues C270 and C338 are joined by a disulfide bond. The helical transmembrane segment at 356–381 (VSSTFSWSIALAPLSLIILVVGAIWM) threads the bilayer. Over 382–410 (RRRCKRRAGKTYGLTKLRTDNQDFPSSPN) the chain is Cytoplasmic.

This sequence belongs to the interleukin-1 receptor family. As to quaternary structure, associates with IL1RAP to form a non-signaling interleukin-1 receptor complex. In terms of processing, a soluble form (sIL1R2) can also be produced by proteolytic cleavage at the cell surface (shedding) involving a metalloproteinase. In terms of tissue distribution, strongly expressed in B-cells, with levels 21 times higher than IL1R1. In T-cells expressed 5 times more compared with IL1R1.

It localises to the membrane. The protein resides in the cell membrane. It is found in the secreted. Its function is as follows. Non-signaling receptor for IL1A, IL1B and IL1RN. Reduces IL1B activities. Serves as a decoy receptor by competitive binding to IL1B and preventing its binding to IL1R1. Also modulates cellular response through non-signaling association with IL1RAP after binding to IL1B. IL1R2 (membrane and secreted forms) preferentially binds IL1B and poorly IL1A and IL1RN. The secreted IL1R2 recruits secreted IL1RAP with high affinity; this complex formation may be the dominant mechanism for neutralization of IL1B by secreted/soluble receptors. This Mus musculus (Mouse) protein is Interleukin-1 receptor type 2 (Il1r2).